Here is a 66-residue protein sequence, read N- to C-terminus: Beta-mammal toxin Cv5 (66 aa).

Positions 1–66 (KEGYIVNYYD…VWPLPKKKCN (66 aa)) constitute an LCN-type CS-alpha/beta domain. Disulfide bonds link C12/C65, C16/C41, C25/C46, and C29/C48.

In terms of tissue distribution, expressed by the venom gland.

It localises to the secreted. Its activity is regulated as follows. Is susceptible to be neutralized by human antibodies scFvs 10FG2 and HV. Functionally, beta toxins bind voltage-independently at site-4 of sodium channels (Nav) and reduces peak current and shifts the voltage of activation toward more negative potentials thereby affecting sodium channel activation and promoting spontaneous and repetitive firing. This toxin is moderately toxic to mice. The polypeptide is Beta-mammal toxin Cv5 (Centruroides villegasi (Scorpion)).